Consider the following 122-residue polypeptide: MIKKEDRKFKRIKRHLRIRKKVFGTSERPRLSVFRSEKHIYAQIIDDTKGHTLVSASTLDPDLRARIAKTYNKEAAKEVGKLVAQKALSKGISQVVFDRGGFKFHGRIRELADAAREAGLKF.

Belongs to the universal ribosomal protein uL18 family. Part of the 50S ribosomal subunit; part of the 5S rRNA/L5/L18/L25 subcomplex. Contacts the 5S and 23S rRNAs.

In terms of biological role, this is one of the proteins that bind and probably mediate the attachment of the 5S RNA into the large ribosomal subunit, where it forms part of the central protuberance. This chain is Large ribosomal subunit protein uL18, found in Pseudothermotoga lettingae (strain ATCC BAA-301 / DSM 14385 / NBRC 107922 / TMO) (Thermotoga lettingae).